The following is a 306-amino-acid chain: D-glucosamine-6-phosphate 4-epimerase (306 aa).

The region spanning 19 to 153 (DIPGVKTAEK…TGSNYRVQDL (135 aa)) is the SIS domain. The active-site Proton acceptor is Glu200. His216 functions as the Proton donor in the catalytic mechanism. Residue Arg296 is the Proton acceptor of the active site.

Belongs to the PGI/PMI family.

The enzyme catalyses D-glucosamine 6-phosphate = D-galactosamine 6-phosphate. Its function is as follows. Involved in the synthesis of UDP-N-acetylgalactosamine (UDP-GalNAc). Catalyzes the conversion of glucosamine-6-phosphate (GlcN-6-P) to galactosamine-6-phosphate (GalN-6-P). The protein is D-glucosamine-6-phosphate 4-epimerase of Sulfolobus acidocaldarius (strain ATCC 33909 / DSM 639 / JCM 8929 / NBRC 15157 / NCIMB 11770).